The primary structure comprises 1108 residues: MRILLLLLQNILVFCQFLQTIKVGLMFSKDTASVIRSVGYRTSAAAVLVAKDRIRAEHLLDQYDFNFTIKFDECSESLAAGKVVELLTHDNVDVIIGPTCNRAGVAVASLADFYNVPVFQWGLTTTADIGNFSRYQTTVTLSLDTHSISLAVREILRQYGWSEFVFIYSNDGDEEKCAAMKDDMEKMGIENSDVTMAYMIQIQTVTMESLQRTLLEVSKRGRIIIACFASGRGFKKAFIASTVLAGMSTEEYLYVFAEPQSRGFYVDEADGKVHYSWDDTDGQLVTGLTNEQIRDAYGKVLYICDNMGEPTTITTQYTNFTSQVISRMAEQPFNCVQDCSNQSYKHAATYAGQLADSFYAYAFALNKSLTQDPTRSNLKNGSFVLSNIGMTFQGVGGEAVTLDESGSRIVQVYMFAMNSSLLPYMAASLLVNVSEVVFTPFYKSESELWSVRPLSRPKCGFTGLECPADFVKEYLVYTIIAAFIVILALLAGCAGLLYTMHMKRKEMERQDLLWQVAFVELQQVQSKSRAEASMHSFASGPSTSTKMTVESRTETTNFIFYHYHQEVVAAKKHDLLVLFDANQKSEFRQMRNFDNDNLNKFIGLCLDGPQLLSLWRFCSRGSLSDVISKSSMQMDSFFMFSLIRDISNGLYFIHSSFLKCHGQLTSRCCLIDDRWQIKISGFGLKSVRTFENPKKEDLLWASPEYLRNEDQERLPEGDIYSFGIICAEILTRSSAFDLENRKEKPDVIIYQVKKGGHNPTRPSLDTGETVVINPALLHLVRDCWTERPSERPSIEQVRSHLNGMKDGRKTNLMDHVFNMLETYASTLEEEVSDRTKELTEEKKKSDVLLYRMLPRMVADKLKLGQTVEPETFEQVTIFFSDVVQFTTLAGKCTPLQVVTLLNDLYTIFDGIIEQNDVYKVETIGDGYLCVSGLPHRNGNDHIRHIARMSLGFLSSLEFFRVQHLPAERINLRIGINCGSVVAGVVGLTMPRYCLFGDAVNTASRMESNGKPGQIHVTAEANRMLTQVVGGFRTESRGEVIIKGKGVMETFWLLGEESGYTAPSKAAPKVIQHRQSIRSISPILEKNAEGSETSSLSVDQAGDNNSETV.

An N-terminal signal peptide occupies residues M1–C15. Topologically, residues Q16–Y474 are extracellular. N-linked (GlcNAc...) asparagine glycosylation is found at N66, N131, N319, N341, N366, and N380. Residues L475–G495 traverse the membrane as a helical segment. Residues F483–G803 form the Protein kinase domain. ATP contacts are provided by residues L489–L497 and K571. Residues L496–V1108 are Cytoplasmic-facing. The Guanylate cyclase domain occupies T876–E1006. Residues L1083–V1108 are disordered. The segment covering G1089–V1108 has biased composition (polar residues).

The protein belongs to the adenylyl cyclase class-4/guanylyl cyclase family. As to expression, expressed asymmetrically in ASE left (ASEL) sensory neuron. Expressed in excretory gland and canal cell.

Its subcellular location is the cell membrane. The enzyme catalyses GTP = 3',5'-cyclic GMP + diphosphate. Its function is as follows. Guanylate cyclase involved in the production of the second messenger cGMP. The sequence is that of Receptor-type guanylate cyclase gcy-20 from Caenorhabditis elegans.